Reading from the N-terminus, the 173-residue chain is Adenine phosphoribosyltransferase (173 aa).

It belongs to the purine/pyrimidine phosphoribosyltransferase family. Homodimer.

The protein localises to the cytoplasm. The enzyme catalyses AMP + diphosphate = 5-phospho-alpha-D-ribose 1-diphosphate + adenine. Its pathway is purine metabolism; AMP biosynthesis via salvage pathway; AMP from adenine: step 1/1. Its function is as follows. Catalyzes a salvage reaction resulting in the formation of AMP, that is energically less costly than de novo synthesis. In Caldanaerobacter subterraneus subsp. tengcongensis (strain DSM 15242 / JCM 11007 / NBRC 100824 / MB4) (Thermoanaerobacter tengcongensis), this protein is Adenine phosphoribosyltransferase.